The primary structure comprises 246 residues: tRNA pseudouridine synthase A (246 aa).

Asp52 serves as the catalytic Nucleophile. Tyr111 serves as a coordination point for substrate.

It belongs to the tRNA pseudouridine synthase TruA family. In terms of assembly, homodimer.

The enzyme catalyses uridine(38/39/40) in tRNA = pseudouridine(38/39/40) in tRNA. Functionally, formation of pseudouridine at positions 38, 39 and 40 in the anticodon stem and loop of transfer RNAs. The polypeptide is tRNA pseudouridine synthase A (Rhodopseudomonas palustris (strain BisA53)).